The following is a 154-amino-acid chain: NADPH-dependent 7-cyano-7-deazaguanine reductase (154 aa).

Cys-54 functions as the Thioimide intermediate in the catalytic mechanism. Asp-61 serves as the catalytic Proton donor. Residues 76–78 (VES) and 95–96 (HE) each bind substrate.

It belongs to the GTP cyclohydrolase I family. QueF type 1 subfamily.

Its subcellular location is the cytoplasm. The catalysed reaction is 7-aminomethyl-7-carbaguanine + 2 NADP(+) = 7-cyano-7-deazaguanine + 2 NADPH + 3 H(+). It functions in the pathway tRNA modification; tRNA-queuosine biosynthesis. Functionally, catalyzes the NADPH-dependent reduction of 7-cyano-7-deazaguanine (preQ0) to 7-aminomethyl-7-deazaguanine (preQ1). The polypeptide is NADPH-dependent 7-cyano-7-deazaguanine reductase (Porphyromonas gingivalis (strain ATCC 33277 / DSM 20709 / CIP 103683 / JCM 12257 / NCTC 11834 / 2561)).